Consider the following 128-residue polypeptide: MRHRKSGRQLNRNSSHRQAMFRNLASALVSHEIIKTTLPKAKELRRVVEPLITLAKVDSVANRRLAFARTRNVETVAKLFNELGPRFAQRAGGYTRILKCGFRAGDNAPMAYIELVDRPEVAEATTEE.

Belongs to the bacterial ribosomal protein bL17 family. Part of the 50S ribosomal subunit. Contacts protein L32.

The polypeptide is Large ribosomal subunit protein bL17 (Haemophilus influenzae (strain 86-028NP)).